Reading from the N-terminus, the 1086-residue chain is DNA polymerase (1086 aa).

The interval 638 to 657 is disordered; it reads STTRKPVDDVEEHSECNGFT.

This sequence belongs to the DNA polymerase type-B family.

The enzyme catalyses DNA(n) + a 2'-deoxyribonucleoside 5'-triphosphate = DNA(n+1) + diphosphate. Its function is as follows. Replicates the viral genome. Host DNA polymerases cannot substitute for the viral enzyme in this process. The polypeptide is DNA polymerase (Noctuidae (owlet moths)).